The following is a 518-amino-acid chain: Protein PNS1 (518 aa).

Over residues 1 to 14 (MSDYPPPNYPPPNH) the composition is skewed to pro residues. Residues 1–24 (MSDYPPPNYPPPNHPQYQQQQDET) form a disordered region. Topologically, residues 1–63 (MSDYPPPNYP…KVEKPKFNDW (63 aa)) are cytoplasmic. Residues 64 to 84 (PFAIFFWLVVAGFIAVAGITL) form a helical membrane-spanning segment. Topologically, residues 85–111 (NALRSTYGFQGGSIYGSGNTFTLNTNT) are extracellular. A helical membrane pass occupies residues 112–132 (IILFAFIIVMAFILSAAIIVF). Topologically, residues 133-139 (ARLAPKA) are cytoplasmic. A helical transmembrane segment spans residues 140–160 (FIVTGVILNVVLGIGTAIFYF). The Extracellular portion of the chain corresponds to 161 to 163 (VEK). Residues 164 to 184 (YYSAAIVFLIFALFGAWCYWS) traverse the membrane as a helical segment. Residues 185–210 (SRHRIPLSATILTIVIDVMKMYPSTL) are Cytoplasmic-facing. Residues 211–231 (IASFIGLIFSAAFSALFSIVI) traverse the membrane as a helical segment. Residues 232-256 (VATYVKYDPNSNNEACSVGGGSCSK) are Extracellular-facing. Residues 257–277 (GKLIGVLVFVFFAGYYISEVI) traverse the membrane as a helical segment. Residues 278-314 (RNVIHVVIAGIYGTWYYLANSDQGAPKHPALSSLKRA) are Cytoplasmic-facing. Residues 315-335 (LTYCFGSITFGSLIVSLIQLL) form a helical membrane-spanning segment. Topologically, residues 336-351 (RQFISILRSNFAADGN) are extracellular. The chain crosses the membrane as a helical span at residues 352-372 (GWGVCGMIILDFFVGFIDWLV). Over 373-417 (RYLNKYAYCYVALYGKSYIKSAKDTFDLIRFKGMDALINDMFINT) the chain is Cytoplasmic. A helical membrane pass occupies residues 418–438 (ALNLYSLFVAYLVALLAYLYL). Residues 439-445 (KFTKPEY) lie on the Extracellular side of the membrane. Residues 446–466 (NSGGAFYAPVIAFAFLIAGQI) form a helical membrane-spanning segment. Topologically, residues 467–518 (NRISLTVIESGTATFFVALAKDPEIFQMTNRNRFDDIFRNYPQVLEKITSDH) are cytoplasmic.

This sequence belongs to the CTL (choline transporter-like) family.

It is found in the cell membrane. In terms of biological role, probably involved in transport through the plasma membrane. This chain is Protein PNS1 (PNS1), found in Candida albicans (strain SC5314 / ATCC MYA-2876) (Yeast).